The sequence spans 224 residues: Holliday junction branch migration complex subunit RuvA (224 aa).

The interval 1–64 (MIGKVAGILD…EDLLQLFGFP (64 aa)) is domain I. The tract at residues 65 to 143 (TMIEKEWHRL…ALMAMGGGTA (79 aa)) is domain II. The tract at residues 141–185 (GTAALAPSEPPEPEPGTSSGSRRKTRAPEPPRPSHTADALSALAN) is disordered. The tract at residues 144-170 (ALAPSEPPEPEPGTSSGSRRKTRAPEP) is flexible linker. A domain III region spans residues 171–224 (PRPSHTADALSALANLGYQPTDAAQAVAQAAGESPDADTAALIRAALKLLAPKS).

This sequence belongs to the RuvA family. In terms of assembly, homotetramer. Forms an RuvA(8)-RuvB(12)-Holliday junction (HJ) complex. HJ DNA is sandwiched between 2 RuvA tetramers; dsDNA enters through RuvA and exits via RuvB. An RuvB hexamer assembles on each DNA strand where it exits the tetramer. Each RuvB hexamer is contacted by two RuvA subunits (via domain III) on 2 adjacent RuvB subunits; this complex drives branch migration. In the full resolvosome a probable DNA-RuvA(4)-RuvB(12)-RuvC(2) complex forms which resolves the HJ.

The protein localises to the cytoplasm. Functionally, the RuvA-RuvB-RuvC complex processes Holliday junction (HJ) DNA during genetic recombination and DNA repair, while the RuvA-RuvB complex plays an important role in the rescue of blocked DNA replication forks via replication fork reversal (RFR). RuvA specifically binds to HJ cruciform DNA, conferring on it an open structure. The RuvB hexamer acts as an ATP-dependent pump, pulling dsDNA into and through the RuvAB complex. HJ branch migration allows RuvC to scan DNA until it finds its consensus sequence, where it cleaves and resolves the cruciform DNA. The polypeptide is Holliday junction branch migration complex subunit RuvA (Cereibacter sphaeroides (strain ATCC 17029 / ATH 2.4.9) (Rhodobacter sphaeroides)).